Reading from the N-terminus, the 301-residue chain is Oxygen-dependent coproporphyrinogen-III oxidase (301 aa).

S94 contributes to the substrate binding site. H98 and H108 together coordinate a divalent metal cation. The active-site Proton donor is H108. Residue 110–112 (NVR) coordinates substrate. Positions 147 and 177 each coordinate a divalent metal cation. An important for dimerization region spans residues 242-277 (YVEFNLVYDRGTLFGLQSGGRTESILMSMPPLARWE). Position 260–262 (260–262 (GGR)) interacts with substrate.

It belongs to the aerobic coproporphyrinogen-III oxidase family. Homodimer. The cofactor is a divalent metal cation.

The protein resides in the cytoplasm. The catalysed reaction is coproporphyrinogen III + O2 + 2 H(+) = protoporphyrinogen IX + 2 CO2 + 2 H2O. It functions in the pathway porphyrin-containing compound metabolism; protoporphyrin-IX biosynthesis; protoporphyrinogen-IX from coproporphyrinogen-III (O2 route): step 1/1. In terms of biological role, involved in the heme biosynthesis. Catalyzes the aerobic oxidative decarboxylation of propionate groups of rings A and B of coproporphyrinogen-III to yield the vinyl groups in protoporphyrinogen-IX. This Photobacterium profundum (strain SS9) protein is Oxygen-dependent coproporphyrinogen-III oxidase.